We begin with the raw amino-acid sequence, 267 residues long: Hydroxyethylthiazole kinase 2 (267 aa).

Position 41 (Met41) interacts with substrate. ATP is bound by residues Lys116 and Thr166. Gly193 contributes to the substrate binding site.

This sequence belongs to the Thz kinase family. Mg(2+) is required as a cofactor.

The catalysed reaction is 5-(2-hydroxyethyl)-4-methylthiazole + ATP = 4-methyl-5-(2-phosphooxyethyl)-thiazole + ADP + H(+). The protein operates within cofactor biosynthesis; thiamine diphosphate biosynthesis; 4-methyl-5-(2-phosphoethyl)-thiazole from 5-(2-hydroxyethyl)-4-methylthiazole: step 1/1. Functionally, catalyzes the phosphorylation of the hydroxyl group of 4-methyl-5-beta-hydroxyethylthiazole (THZ). The sequence is that of Hydroxyethylthiazole kinase 2 from Streptococcus pneumoniae (strain Taiwan19F-14).